The following is a 73-amino-acid chain: MASNKVSFFLVLCLCVLSTAEFGEAQILTGIKCPDPNGHDKEDKCNIYCLNQNYMGGSCQGYKNHYMCECYVG.

The N-terminal stretch at 1–25 (MASNKVSFFLVLCLCVLSTAEFGEA) is a signal peptide. Cystine bridges form between Cys-33/Cys-59, Cys-45/Cys-68, and Cys-49/Cys-70.

The protein belongs to the DEFL family.

It localises to the secreted. This Arabidopsis thaliana (Mouse-ear cress) protein is Defensin-like protein 34.